The following is a 181-amino-acid chain: Acireductone dioxygenase (181 aa).

Fe(2+)-binding residues include H100, H102, E106, and H145. Positions 100, 102, 106, and 145 each coordinate Ni(2+).

Belongs to the acireductone dioxygenase (ARD) family. Monomer. Fe(2+) is required as a cofactor. The cofactor is Ni(2+).

It carries out the reaction 1,2-dihydroxy-5-(methylsulfanyl)pent-1-en-3-one + O2 = 3-(methylsulfanyl)propanoate + CO + formate + 2 H(+). It catalyses the reaction 1,2-dihydroxy-5-(methylsulfanyl)pent-1-en-3-one + O2 = 4-methylsulfanyl-2-oxobutanoate + formate + 2 H(+). The protein operates within amino-acid biosynthesis; L-methionine biosynthesis via salvage pathway; L-methionine from S-methyl-5-thio-alpha-D-ribose 1-phosphate: step 5/6. Its function is as follows. Catalyzes 2 different reactions between oxygen and the acireductone 1,2-dihydroxy-3-keto-5-methylthiopentene (DHK-MTPene) depending upon the metal bound in the active site. Fe-containing acireductone dioxygenase (Fe-ARD) produces formate and 2-keto-4-methylthiobutyrate (KMTB), the alpha-ketoacid precursor of methionine in the methionine recycle pathway. Ni-containing acireductone dioxygenase (Ni-ARD) produces methylthiopropionate, carbon monoxide and formate, and does not lie on the methionine recycle pathway. This chain is Acireductone dioxygenase, found in Trichodesmium erythraeum (strain IMS101).